Here is a 1013-residue protein sequence, read N- to C-terminus: Polyprotein of EF-Ts, chloroplastic (1013 aa).

The N-terminal 43 residues, 1–43 (MLRELGRTATVKAHGRSVLRPVRGPAGRRQVAFTGVRPSVRVF), are a transit peptide targeting the chloroplast. One can recognise an S1 motif 1 domain in the interval 64–133 (GSEYEGTVTT…EKKRVSLELK (70 aa)). The span at 141-150 (SAEESDDIIT) shows a compositional bias: acidic residues. The segment at 141–163 (SAEESDDIITEPDREGADATDDD) is disordered. In terms of domain architecture, S1 motif 2 spans 227–331 (MEEVTGKVAR…DGRGISLTHF (105 aa)). A disordered region spans residues 772 to 798 (QAKAAAPAAPKKEEPKKEEPKKATVAV). The segment covering 781 to 793 (PKKEEPKKEEPKK) has biased composition (basic and acidic residues).

The protein belongs to the EF-Ts family. Component of the chloroplast ribosome 30S and 70S subunits, as well as polysomes. As to quaternary structure, component of the chloroplast ribosome 70S subunit, and at low levels, present in polysomes. In terms of assembly, associates transiently with chloroplast polysomes.

The protein resides in the plastid. The protein localises to the chloroplast. Associates with the EF-Tu.GDP complex and induces the exchange of GDP to GTP. It remains bound to the aminoacyl-tRNA.EF-Tu.GTP complex up to the GTP hydrolysis stage on the ribosome. Functionally, binds to psbD and psbA mRNAs 5'-untranslated regions (UTRs) in vitro. This Chlamydomonas reinhardtii (Chlamydomonas smithii) protein is Polyprotein of EF-Ts, chloroplastic.